Here is a 261-residue protein sequence, read N- to C-terminus: uncharacterized protein (261 aa).

A divalent metal cation contacts are provided by His7, His9, Glu96, His132, His156, and Asp211.

This sequence belongs to the metallo-dependent hydrolases superfamily. TatD-type hydrolase family. A divalent metal cation is required as a cofactor.

This is an uncharacterized protein from Mycoplasma pneumoniae (strain ATCC 29342 / M129 / Subtype 1) (Mycoplasmoides pneumoniae).